The primary structure comprises 120 residues: Proteinase inhibitor (120 aa).

A signal peptide spans 1 to 19 (MKQLIIATLLSALSGGCMA). Cys-43 and Cys-65 are disulfide-bonded.

This sequence belongs to the protease inhibitor I38 family. As to quaternary structure, monomer.

The protein resides in the periplasm. Inhibitor of the extracellular proteases A, B, and C of E.chrysanthemi and the S.marcescens 50 kDa extracellular protease. It forms a non-covalent bond with the proteases and may prevent autocatalytic cleavage of the proteases zymogen in the periplasm. The sequence is that of Proteinase inhibitor (inh) from Dickeya chrysanthemi (Pectobacterium chrysanthemi).